The chain runs to 313 residues: Uracil-DNA glycosylase (313 aa).

The segment covering 1 to 12 (MIGQKTLYSFFS) has biased composition (polar residues). Residues 1-25 (MIGQKTLYSFFSPSPARKRHAPSPE) form an interaction with FAM72A region. Residues 1–29 (MIGQKTLYSFFSPSPARKRHAPSPEPAVQ) are mitochondrial localization signal. A disordered region spans residues 1-68 (MIGQKTLYSF…GTPPSSPLSA (68 aa)). Residues Ser12 and Ser14 each carry the phosphoserine modification. The short motif at 17 to 19 (RKR) is the Important for nuclear sorting element. Ser23 carries the phosphoserine modification. Over residues 43–53 (AAAIPAKKAPA) the composition is skewed to low complexity. At Thr60 the chain carries Phosphothreonine. Ser64 carries the post-translational modification Phosphoserine. An interaction with RPA2 region spans residues 73–88 (RIQRNKAAALLRLAAR). Residue Gln153 participates in uracil binding. Catalysis depends on Asp154, which acts as the Proton acceptor. Position 157 (His157) interacts with dsDNA. Residue Phe167 participates in uracil binding. Ser178 is a binding site for dsDNA. Asn213 lines the uracil pocket. Positions 256, 277, 279, 282, and 285 each coordinate dsDNA. Residue His277 coordinates uracil. The residue at position 295 (Lys295) is an N6-acetyllysine.

It belongs to the uracil-DNA glycosylase (UDG) superfamily. UNG family. As to quaternary structure, monomer. In terms of assembly, interacts with RPA2 subunit of the RPA trimer; this interaction mediates UNG2 recruitment to RPA-coated single-stranded DNA at stalled replication forks. Interacts with PCNA; this interaction mediates UNG2 recruitment to S-phase replication foci. Interacts (via N-terminus) with FAM72A. (Microbial infection) Interacts with HIV-1 Vpr. Post-translationally, processed by mitochondrial serine or cysteine peptidases to yield a mature dominant form that lacks N-terminal 29 amino acid residues and another minor form that lacks N-terminal 77 amino acid residues. The catalytic activity of UNG1 delta29 is not product-inhibited by AP sites.

It localises to the mitochondrion. The protein localises to the nucleus. It catalyses the reaction Hydrolyzes single-stranded DNA or mismatched double-stranded DNA and polynucleotides, releasing free uracil.. The catalysed reaction is a 2'-deoxyuridine in single-stranded DNA + H2O = a 2'-deoxyribose 5'-monophosphate in single-stranded DNA + uracil. It carries out the reaction a 2'-deoxyuridine in double-stranded DNA + H2O = a 2'-deoxyribose 5'-monophosphate in double-stranded DNA + uracil. In terms of biological role, uracil-DNA glycosylase that hydrolyzes the N-glycosidic bond between uracil and deoxyribose in single- and double-stranded DNA (ssDNA and dsDNA) to release a free uracil residue and form an abasic (apurinic/apyrimidinic; AP) site. Excises uracil residues arising as a result of misincorporation of dUMP residues by DNA polymerase during replication or due to spontaneous or enzymatic deamination of cytosine. Mediates error-free base excision repair (BER) of uracil at replication forks. According to the model, it is recruited by PCNA to S-phase replication forks to remove misincorporated uracil at U:A base mispairs in nascent DNA strands. Via trimeric RPA it is recruited to ssDNA stretches ahead of the polymerase to allow detection and excision of deaminated cytosines prior to replication. The resultant AP sites temporarily stall replication, allowing time to repair the lesion. Mediates mutagenic uracil processing involved in antibody affinity maturation. Processes AICDA-induced U:G base mispairs at variable immunoglobulin (Ig) regions leading to the generation of transversion mutations. Operates at switch sites of Ig constant regions where it mediates Ig isotype class switch recombination. Excises AICDA-induced uracil residues forming AP sites that are subsequently nicked by APEX1 endonuclease. The accumulation of staggered nicks in opposite strands results in double strand DNA breaks that are finally resolved via non-homologous end joining repair pathway. The sequence is that of Uracil-DNA glycosylase from Homo sapiens (Human).